We begin with the raw amino-acid sequence, 667 residues long: YTH domain-containing protein ECT2 (667 aa).

Disordered stretches follow at residues Gln-264–Val-305 and Asn-379–Asp-398. Residues Val-267–Ser-285 are compositionally biased toward low complexity. Residues Arg-286–Val-305 show a composition bias toward polar residues. Residues Ala-442 to Phe-579 enclose the YTH domain. RNA is bound by residues Lys-448–Tyr-450, Asp-454, Trp-464–Ala-465, Asn-497, Trp-521, Trp-526, and Trp-534. Residues Lys-606 to Cys-667 form a disordered region. Basic and acidic residues predominate over residues Val-614 to Ala-627. Positions Thr-628 to Ala-639 are enriched in low complexity.

As to quaternary structure, interacts (via C-terminus) with CIPK1. As to expression, expressed in the shoot apex, at the sites of leaf formation, and in emerging leaves. Highly expressed in rapidly developing tissues.

It is found in the cytoplasm. Its subcellular location is the nucleus. Specifically recognizes and binds N6-methyladenosine (m6A)-containing RNAs, and regulates mRNA stability. M6A is a modification present at internal sites of mRNAs and some non-coding RNAs and plays a role in mRNA stability and processing. Binds preferentially in the 3'UTRs of target genes. May play dual roles in regulating 3'UTR processing in the nucleus and facilitating mRNA stability in the cytoplasm. Required for the correct timing of leaf formation and normal leaf morphology. Functions redundantly with ECT3. Required for proper trichome branching and morphology. Controls trichome morphology by binding transcripts related to trichome morphogenesis and affecting their stability. The chain is YTH domain-containing protein ECT2 from Arabidopsis thaliana (Mouse-ear cress).